The sequence spans 466 residues: cGMP-specific 3',5'-cGMP phosphodiesterase 3 (466 aa).

Low complexity predominate over residues 1–120; the sequence is MAPQQNIMKQ…NSNNNNSNNN (120 aa). The segment at 1-150 is disordered; sequence MAPQQNIMKQ…NNNKIRGYND (150 aa). Residues 123 to 134 are compositionally biased toward acidic residues; the sequence is DDEEEEGDDEDN. Residues 135 to 150 show a composition bias toward low complexity; the sequence is NNNNNSNNNKIRGYND. A PDEase domain is found at 137–458; sequence NNNSNNNKIR…EIWSNNGSSS (322 aa). His213 (proton donor) is an active-site residue. 4 residues coordinate a divalent metal cation: His217, His253, Asp254, and Asp364.

It belongs to the cyclic nucleotide phosphodiesterase family. Requires a divalent metal cation as cofactor.

The protein localises to the cytoplasm. It localises to the cytosol. It catalyses the reaction 3',5'-cyclic GMP + H2O = GMP + H(+). Its activity is regulated as follows. Inhibited by 3-isobutyl-1-methylxanthine (IBMX). Functionally, phosphodiesterase specific for cGMP, which is not activated by cGMP. Involved in the degradation of intracellular cGMP. This Dictyostelium discoideum (Social amoeba) protein is cGMP-specific 3',5'-cGMP phosphodiesterase 3 (pde3).